The following is a 1208-amino-acid chain: DNA-directed RNA polymerase subunit beta (1208 aa).

The interval 1182-1208 (EKKAAEQVEDEKDDVIQNFETAEDNLD) is disordered.

Belongs to the RNA polymerase beta chain family. In terms of assembly, the RNAP catalytic core consists of 2 alpha, 1 beta, 1 beta' and 1 omega subunit. When a sigma factor is associated with the core the holoenzyme is formed, which can initiate transcription.

The enzyme catalyses RNA(n) + a ribonucleoside 5'-triphosphate = RNA(n+1) + diphosphate. In terms of biological role, DNA-dependent RNA polymerase catalyzes the transcription of DNA into RNA using the four ribonucleoside triphosphates as substrates. The chain is DNA-directed RNA polymerase subunit beta from Enterococcus faecium (Streptococcus faecium).